The chain runs to 305 residues: Probable cell division protein WhiA (305 aa).

Positions 269-302 (TIKELGELLDPPLGKSGVNHRLRKLVERSNDLKK) form a DNA-binding region, H-T-H motif.

This sequence belongs to the WhiA family.

In terms of biological role, involved in cell division and chromosome segregation. This is Probable cell division protein WhiA from Lactococcus lactis subsp. cremoris (strain MG1363).